Consider the following 193-residue polypeptide: MGLNDSSGTLVAPKPKGIIDPNTGRPVGEDDPFFLEINNELADKGFLVTSTEALITWARSGSLMFMTFGLACCAVEMIHTSMPRYDSERFGVAPRASPRQSDIMIVAGTLTNKMAPALRKVYDQMPEPRYVISMGSCANGGGYYHYSYSVVRGCDRIVPVDIYVPGCPPSAEALLYGILLLQKKIRRTGTIER.

The interval Met-1 to Arg-25 is disordered. [4Fe-4S] cluster is bound by residues Cys-72, Cys-73, Cys-137, and Cys-167.

The protein belongs to the complex I 20 kDa subunit family. In terms of assembly, NDH-1 is composed of 14 different subunits. Subunits NuoB, C, D, E, F, and G constitute the peripheral sector of the complex. [4Fe-4S] cluster is required as a cofactor.

Its subcellular location is the cell inner membrane. The enzyme catalyses a quinone + NADH + 5 H(+)(in) = a quinol + NAD(+) + 4 H(+)(out). In terms of biological role, NDH-1 shuttles electrons from NADH, via FMN and iron-sulfur (Fe-S) centers, to quinones in the respiratory chain. Couples the redox reaction to proton translocation (for every two electrons transferred, four hydrogen ions are translocated across the cytoplasmic membrane), and thus conserves the redox energy in a proton gradient. This chain is NADH-quinone oxidoreductase subunit B, found in Mesorhizobium japonicum (strain LMG 29417 / CECT 9101 / MAFF 303099) (Mesorhizobium loti (strain MAFF 303099)).